A 95-amino-acid chain; its full sequence is Aspartyl/glutamyl-tRNA(Asn/Gln) amidotransferase subunit C (95 aa).

Belongs to the GatC family. In terms of assembly, heterotrimer of A, B and C subunits.

It catalyses the reaction L-glutamyl-tRNA(Gln) + L-glutamine + ATP + H2O = L-glutaminyl-tRNA(Gln) + L-glutamate + ADP + phosphate + H(+). The enzyme catalyses L-aspartyl-tRNA(Asn) + L-glutamine + ATP + H2O = L-asparaginyl-tRNA(Asn) + L-glutamate + ADP + phosphate + 2 H(+). Allows the formation of correctly charged Asn-tRNA(Asn) or Gln-tRNA(Gln) through the transamidation of misacylated Asp-tRNA(Asn) or Glu-tRNA(Gln) in organisms which lack either or both of asparaginyl-tRNA or glutaminyl-tRNA synthetases. The reaction takes place in the presence of glutamine and ATP through an activated phospho-Asp-tRNA(Asn) or phospho-Glu-tRNA(Gln). The chain is Aspartyl/glutamyl-tRNA(Asn/Gln) amidotransferase subunit C from Nitrosomonas europaea (strain ATCC 19718 / CIP 103999 / KCTC 2705 / NBRC 14298).